The chain runs to 208 residues: MLSVILKESVRNLGKAGMVLKVKPGYARYLLTQKKAVRATKENLKSLEEQYLFIEKENLEKLEAAKVLKASLEDEFLIITRQAADDGKLFGSVTPKCISKLLSDKGYNIHYRNIFFYSVIKYIGEYVVNLELHPDLVLPITLYVVKNDLGAMQAQKLHAEKKRKIEEGKVEKGSCTEGESLELGSVDNDINSGNVDSNESEKQDSVSE.

Residues 168-208 form a disordered region; sequence GKVEKGSCTEGESLELGSVDNDINSGNVDSNESEKQDSVSE. Residues 188–197 are compositionally biased toward polar residues; sequence NDINSGNVDS. The span at 199 to 208 shows a compositional bias: basic and acidic residues; the sequence is ESEKQDSVSE.

This sequence belongs to the bacterial ribosomal protein bL9 family.

In terms of biological role, binds to the 23S rRNA. In Ehrlichia chaffeensis (strain ATCC CRL-10679 / Arkansas), this protein is Large ribosomal subunit protein bL9.